Reading from the N-terminus, the 362-residue chain is Probable secreted beta-glucosidase UTH1 (362 aa).

Positions 1–17 (MKLSALLALSASTAVLA) are cleaved as a signal peptide.

The protein belongs to the SUN family.

It is found in the mitochondrion outer membrane. It localises to the secreted. Its subcellular location is the cell wall. In terms of biological role, involved in aging, oxidative stress response, and in the regulation of mitochondrial biogenesis. Inactivation of UTH1 increases life span, leads to higher resistance to heat stress and to hydrogen peroxide, and increases sensitivity to the superoxide radical-generating drug paraquat and to copper. Also required for the selective autophagic degradation of mitochondria (mitophagy) in response to nitrogen starvation. Involved in the remodeling of the cell wall during the various phases of yeast culture development and under various environmental conditions and plays a role in septation. Involved in cell sensitivity to boric acid. The polypeptide is Probable secreted beta-glucosidase UTH1 (UTH1) (Saccharomyces cerevisiae (strain RM11-1a) (Baker's yeast)).